Consider the following 283-residue polypeptide: 9,11-endoperoxide prostaglandin H2 reductase (283 aa).

NADP(+)-binding positions include 23–24 and Asp-48; that span reads VW. Catalysis depends on Tyr-53, which acts as the Proton donor. His-111 serves as a coordination point for substrate. NADP(+) is bound by residues 140–141, Gln-162, 188–193, 234–236, and 240–244; these read SN, WSPLGS, KST, and RIQEN. Residues 264-283 are disordered; the sequence is NEDKRIGGDPDNFFPGGEEA.

Belongs to the aldo/keto reductase family. In terms of assembly, monomer.

It localises to the cytoplasm. It catalyses the reaction prostaglandin F2alpha + NADP(+) = prostaglandin H2 + NADPH + H(+). It functions in the pathway lipid metabolism; prostaglandin biosynthesis. Catalyzes the NADP-dependent formation of prostaglandin F2-alpha from prostaglandin H2. Also has aldo/ketoreductase activity towards the synthetic substrates 9,10-phenanthrenequinone and p-nitrobenzaldehyde. The sequence is that of 9,11-endoperoxide prostaglandin H2 reductase from Trypanosoma cruzi (strain CL Brener).